The primary structure comprises 501 residues: Iroquois-class homeodomain protein IRX-3 (501 aa).

The segment at residues 125–188 (FGDPSRPKNA…ANARRRLKKE (64 aa)) is a DNA-binding region (homeobox; TALE-type). The tract at residues 190–381 (KMTWAPRSRT…SPPGAAVAPS (192 aa)) is disordered. 2 stretches are compositionally biased toward acidic residues: residues 210–220 (REEEDEEEDEE) and 227–258 (ELEEEELGGEEEDTGGEGLADDDEDEEIDLEN). S323 and S326 each carry phosphoserine. The segment covering 324 to 339 (LPSPPVSLDPCAPAPA) has biased composition (pro residues).

It belongs to the TALE/IRO homeobox family.

Its subcellular location is the nucleus. In terms of biological role, transcription factor involved in SHH-dependent neural patterning. Together with NKX2-2 and NKX6-1 acts to restrict the generation of motor neurons to the appropriate region of the neural tube. Belongs to the class I proteins of neuronal progenitor factors, which are repressed by SHH signals. Involved in the transcriptional repression of MNX1 in non-motor neuron cells. Acts as a regulator of energy metabolism. The protein is Iroquois-class homeodomain protein IRX-3 (IRX3) of Homo sapiens (Human).